Reading from the N-terminus, the 176-residue chain is MKNKTEYYDQFISKIPNFPKKGVLFYDITSVLLKPEVYSSLINEVYSFYNFKKIDCIAVVESRGYLIGAPLSLKMQLPLVLIRKEGKLPREVFSEEYELEYGFGRIEVHKDDVRTYSNILLIDDILATGGTLKSSAILLERAGGKVKDIFCFIELCAINGRQSLESYEVNSLVRYN.

The protein belongs to the purine/pyrimidine phosphoribosyltransferase family. In terms of assembly, homodimer.

The protein resides in the cytoplasm. The catalysed reaction is AMP + diphosphate = 5-phospho-alpha-D-ribose 1-diphosphate + adenine. Its pathway is purine metabolism; AMP biosynthesis via salvage pathway; AMP from adenine: step 1/1. Functionally, catalyzes a salvage reaction resulting in the formation of AMP, that is energically less costly than de novo synthesis. The sequence is that of Adenine phosphoribosyltransferase from Borreliella burgdorferi (strain ATCC 35210 / DSM 4680 / CIP 102532 / B31) (Borrelia burgdorferi).